A 278-amino-acid chain; its full sequence is Thiazole synthase (278 aa).

Lys-109 functions as the Schiff-base intermediate with DXP in the catalytic mechanism. Residues Gly-170, 197–198 (AG), and 219–220 (NT) contribute to the 1-deoxy-D-xylulose 5-phosphate site.

Belongs to the ThiG family. As to quaternary structure, homotetramer. Forms heterodimers with either ThiH or ThiS.

The protein localises to the cytoplasm. The enzyme catalyses [ThiS sulfur-carrier protein]-C-terminal-Gly-aminoethanethioate + 2-iminoacetate + 1-deoxy-D-xylulose 5-phosphate = [ThiS sulfur-carrier protein]-C-terminal Gly-Gly + 2-[(2R,5Z)-2-carboxy-4-methylthiazol-5(2H)-ylidene]ethyl phosphate + 2 H2O + H(+). The protein operates within cofactor biosynthesis; thiamine diphosphate biosynthesis. Its function is as follows. Catalyzes the rearrangement of 1-deoxy-D-xylulose 5-phosphate (DXP) to produce the thiazole phosphate moiety of thiamine. Sulfur is provided by the thiocarboxylate moiety of the carrier protein ThiS. In vitro, sulfur can be provided by H(2)S. The protein is Thiazole synthase of Cupriavidus taiwanensis (strain DSM 17343 / BCRC 17206 / CCUG 44338 / CIP 107171 / LMG 19424 / R1) (Ralstonia taiwanensis (strain LMG 19424)).